A 204-amino-acid polypeptide reads, in one-letter code: MHPISIITGRIVALPAHDIDTDQIIPARYLKVTDKSGLAEGLFYAWRFDAEGKPNPDFVLNRPEAQGATILVAGRNFGCGSSREHAPWALQGYGFKAVISPSFADIFRNNALKNGLLTVQTDEETWQQLVSLFEEDPTTEVIIDLATQTVTLPDGRQARFPIDPFTKHCLLQGIDQMGFLLNEEDAISAYESAHPPRVVTTARS.

It belongs to the LeuD family. LeuD type 1 subfamily. Heterodimer of LeuC and LeuD.

The enzyme catalyses (2R,3S)-3-isopropylmalate = (2S)-2-isopropylmalate. It participates in amino-acid biosynthesis; L-leucine biosynthesis; L-leucine from 3-methyl-2-oxobutanoate: step 2/4. Its function is as follows. Catalyzes the isomerization between 2-isopropylmalate and 3-isopropylmalate, via the formation of 2-isopropylmaleate. This chain is 3-isopropylmalate dehydratase small subunit, found in Roseiflexus castenholzii (strain DSM 13941 / HLO8).